The sequence spans 33 residues: uncharacterized protein (33 aa).

This is an uncharacterized protein from Staphylococcus aureus (strain N315).